We begin with the raw amino-acid sequence, 249 residues long: MTQRLKDKLAVITGGANGIGRAIAERFAVEGADIAIADLVPAPEAEAAIRNLGRRVLTVKCDVSQPGDVEAFGKQVISTFGRCDILVNNAGIYPLIPFDELTFEQWKKTFEINVDSGFLMAKAFVPGMKRNGWGRIINLTSTTYWLKIEAYTHYISTKAANIGFTRALASDLGKDGITVNAIAPSLVRTATTEASALSAMFDVLPNMLQAIPRLQVPLDLTGAAAFLASDDASFITGQTLAVDGGMVRH.

NAD(+)-binding positions include 17–19 (NGI), D38, 61–63 (CDV), N89, and Y93. A substrate-binding site is contributed by S141. Residue Y154 is the Proton acceptor of the active site. NAD(+) is bound by residues K158, 184–187 (PSLV), and T191.

The protein belongs to the short-chain dehydrogenases/reductases (SDR) family. Homotetramer.

It catalyses the reaction (S)-1-phenylethanol + NAD(+) = acetophenone + NADH + H(+). In terms of biological role, catalyzes the NAD-dependent stereospecific oxidation of (S)-1-phenylethanol to acetophenone in the degradation of ethylbenzene. The chain is (S)-1-Phenylethanol dehydrogenase (ped) from Aromatoleum aromaticum (strain DSM 19018 / LMG 30748 / EbN1) (Azoarcus sp. (strain EbN1)).